The chain runs to 610 residues: UvrABC system protein C (610 aa).

In terms of domain architecture, GIY-YIG spans 16-94; that stretch reads SAPGVYRMYD…IKQYMPKYNV (79 aa). The UVR domain maps to 203 to 238; it reads KQVISQLVAKMETAAIDMEYERAAQYRDQITALRRV.

It belongs to the UvrC family. Interacts with UvrB in an incision complex.

It is found in the cytoplasm. The UvrABC repair system catalyzes the recognition and processing of DNA lesions. UvrC both incises the 5' and 3' sides of the lesion. The N-terminal half is responsible for the 3' incision and the C-terminal half is responsible for the 5' incision. The protein is UvrABC system protein C of Shewanella frigidimarina (strain NCIMB 400).